We begin with the raw amino-acid sequence, 112 residues long: Small ribosomal subunit protein eS24 (112 aa).

The disordered stretch occupies residues 88-112; that stretch reads RGMAGEEEGNADAQDAPSGDAAEAS.

This sequence belongs to the eukaryotic ribosomal protein eS24 family.

The sequence is that of Small ribosomal subunit protein eS24 from Methanospirillum hungatei JF-1 (strain ATCC 27890 / DSM 864 / NBRC 100397 / JF-1).